The chain runs to 125 residues: Alpha-endosulfine (125 aa).

The segment covering 1–37 has biased composition (basic and acidic residues); sequence MSDKYIGDSHLEETGEEKQDSQEKEAVTPEKAEEQKL. A disordered region spans residues 1 to 52; the sequence is MSDKYIGDSHLEETGEEKQDSQEKEAVTPEKAEEQKLKAKYPNLGQKPGGSD. T28 bears the Phosphothreonine; by CDK2 mark. S67 is subject to Phosphoserine; by GWL. The interval 86–107 is disordered; sequence GPDKNLVTGDHIPTPQDLPQRK. T99 bears the Phosphothreonine; by CDK2 mark. S109 bears the Phosphoserine; by PKA mark.

The protein belongs to the endosulfine family. Interacts (when phosphorylated at Ser-67) with ppp2r2d. Post-translationally, phosphorylation at Ser-67 by gwl during mitosis is essential for interaction with PPP2R2D (PR55-delta) and subsequent inactivation of PP2A. Phosphorylated by PKA.

Its subcellular location is the cytoplasm. Its function is as follows. Protein phosphatase inhibitor that specifically inhibits protein phosphatase 2A (PP2A) during mitosis. When phosphorylated at Ser-67 during mitosis, specifically interacts with ppp2r2d (PR55-delta) and inhibits its activity, leading to inactivation of PP2A, an essential condition to keep cyclin-B1-CDK1 activity high during M phase. The protein is Alpha-endosulfine (ensa) of Xenopus laevis (African clawed frog).